The following is a 68-amino-acid chain: MKTQFAILLIALVLFQMFSQSEAFLGGLWKAMSNLLGKRGLNELDDLDELFDGEISQADIDFLKELMS.

Positions 1–23 (MKTQFAILLIALVLFQMFSQSEA) are cleaved as a signal peptide. Residue L36 is modified to Leucine amide. Residues 40–68 (GLNELDDLDELFDGEISQADIDFLKELMS) constitute a propeptide that is removed on maturation.

It belongs to the non-disulfide-bridged peptide (NDBP) superfamily. Short antimicrobial peptide (group 4) family. As to expression, expressed by the venom gland.

The protein localises to the secreted. The protein resides in the target cell membrane. In terms of biological role, amphipathic peptide that has antibacterial activities. The chain is Cytotoxic linear peptide from Pandinus cavimanus (Tanzanian red clawed scorpion).